The sequence spans 170 residues: RxLR effector protein CRE16 (170 aa).

A signal peptide spans 1–23; it reads MSKLFYAFAVLAVHVLTSSPTTA. A RxLR-dEER motif is present at residues 47–68; it reads RFLRSIHEGEDSLKPSAFSEER.

Belongs to the RxLR effector family.

The protein localises to the secreted. Its subcellular location is the host cytoplasm. The protein resides in the host nucleus. In terms of biological role, effector that is involved in host plant infection. Contributes to virulence during the early infection stage, by inhibiting plant defense responses induced by both PAMP-triggered immunity (PTI) and effector-triggered immunity (ETI). The protein is RxLR effector protein CRE16 of Phytophthora infestans (strain T30-4) (Potato late blight agent).